The following is a 247-amino-acid chain: Mycofactocin precursor peptide peptidase (247 aa).

5 residues coordinate a divalent metal cation: E38, H40, D49, H124, and E163.

The protein belongs to the creatininase superfamily. As to quaternary structure, homooctamer. Fe(2+) is required as a cofactor. Zn(2+) serves as cofactor.

The enzyme catalyses [mycofactocin precursor peptide]-C-terminal glycyl-N-{5-[(4-hydroxyphenyl)methyl]-4,4-dimethyl-2-oxopyrrolidin-3-yl}acetamide + H2O = [mycofactocin precursor peptide]-C-terminal glycine + 3-amino-5-[(4-hydroxyphenyl)methyl]-4,4-dimethyl-2-pyrrolidin-2-one. Peptidase involved in the biosynthesis of the enzyme cofactor mycofactocin (MFT). Catalyzes cleavage of the MftC-modified MftA peptide to liberate its final two residues, which consist of a cross-linked valine-decarboxylated tyrosine dipeptide (named 3-amino-5-[(4-hydroxyphenyl)methyl]-4,4-dimethyl-2-pyrrolidin-2-one or ADHP). Is required for the in vivo ethanol assimilation in M.smegmatis. This Mycolicibacterium smegmatis (strain ATCC 700084 / mc(2)155) (Mycobacterium smegmatis) protein is Mycofactocin precursor peptide peptidase.